The following is a 308-amino-acid chain: Follistatin-related protein 1 (308 aa).

The signal sequence occupies residues 1–20 (MWKRWLALALALVAVAWVRA). One can recognise a Follistatin-like domain in the interval 30–53 (ICANVFCGAGRECAVTEKGEPTCL). Intrachain disulfides connect cysteine 31–cysteine 42, cysteine 36–cysteine 52, cysteine 54–cysteine 84, cysteine 58–cysteine 77, and cysteine 66–cysteine 98. Positions 48–100 (GEPTCLCIEQCKPHKRPVCGSNGKTYLNHCELHRDACLTGSKIQVDYDGHCKE) constitute a Kazal-like domain. N-linked (GlcNAc...) asparagine glycosylation occurs at asparagine 144. Positions 144 to 178 (NYSEILDKYFKNFDNGDSRLDSSEFLKFVEQNETA) constitute an EF-hand 1 domain. Phosphoserine is present on serine 165. N-linked (GlcNAc...) asparagine glycans are attached at residues asparagine 175 and asparagine 180. The EF-hand 2 domain occupies 193-228 (LRGLCVDALIELSDENADWKLSFQEFLKCLNPSFNP). The VWFC domain maps to 233–287 (CALEDETYADGAETEVDCNRCVCACGNWVCTAMTCDGKNQKGAQTQTEEEMTRYV).

Homodimer. Interacts with SCN10A. Interacts with DIP2A; DIP2A may act as a cell surface receptor for FSTL1. Interacts with BMP4. Interacts with CD14; this interaction promotes TL4-mediated signaling cascade.

The protein resides in the secreted. Secreted glycoprotein that is involved in various physiological processes, such as angiogenesis, regulation of the immune response, cell proliferation and differentiation. Plays a role in the development of the central nervous system, skeletal system, lungs, and ureter. Promotes endothelial cell survival, migration and differentiation into network structures in an AKT-dependent manner. Also promotes survival of cardiac myocytes. Initiates various signaling cascades by activating different receptors on the cell surface such as DIP2A, TLR4 or BMP receptors. The sequence is that of Follistatin-related protein 1 (FSTL1) from Macaca fascicularis (Crab-eating macaque).